A 225-amino-acid polypeptide reads, in one-letter code: Ribosome maturation factor RimM (225 aa).

In terms of domain architecture, PRC barrel spans 144–225 (ADEFYWVDLI…RIVVDWEADY (82 aa)).

It belongs to the RimM family. Binds ribosomal protein uS19.

The protein localises to the cytoplasm. In terms of biological role, an accessory protein needed during the final step in the assembly of 30S ribosomal subunit, possibly for assembly of the head region. Essential for efficient processing of 16S rRNA. May be needed both before and after RbfA during the maturation of 16S rRNA. It has affinity for free ribosomal 30S subunits but not for 70S ribosomes. In Burkholderia orbicola (strain MC0-3), this protein is Ribosome maturation factor RimM.